Consider the following 505-residue polypeptide: Glycerol kinase (505 aa).

ADP is bound at residue Thr-14. Residues Thr-14, Thr-15, and Ser-16 each contribute to the ATP site. Thr-14 contributes to the sn-glycerol 3-phosphate binding site. Arg-18 is an ADP binding site. Sn-glycerol 3-phosphate-binding residues include Arg-84, Glu-85, Tyr-136, and Asp-246. Residues Arg-84, Glu-85, Tyr-136, Asp-246, and Gln-247 each coordinate glycerol. ADP-binding residues include Thr-268 and Gly-311. ATP-binding residues include Thr-268, Gly-311, Gln-315, and Gly-412. ADP contacts are provided by Gly-412 and Asn-416.

Belongs to the FGGY kinase family.

The enzyme catalyses glycerol + ATP = sn-glycerol 3-phosphate + ADP + H(+). It functions in the pathway polyol metabolism; glycerol degradation via glycerol kinase pathway; sn-glycerol 3-phosphate from glycerol: step 1/1. Its activity is regulated as follows. Inhibited by fructose 1,6-bisphosphate (FBP). Key enzyme in the regulation of glycerol uptake and metabolism. Catalyzes the phosphorylation of glycerol to yield sn-glycerol 3-phosphate. This chain is Glycerol kinase, found in Vibrio vulnificus (strain CMCP6).